The chain runs to 190 residues: Imidazoleglycerol-phosphate dehydratase (190 aa).

Belongs to the imidazoleglycerol-phosphate dehydratase family.

It localises to the cytoplasm. The enzyme catalyses D-erythro-1-(imidazol-4-yl)glycerol 3-phosphate = 3-(imidazol-4-yl)-2-oxopropyl phosphate + H2O. It participates in amino-acid biosynthesis; L-histidine biosynthesis; L-histidine from 5-phospho-alpha-D-ribose 1-diphosphate: step 6/9. The chain is Imidazoleglycerol-phosphate dehydratase from Campylobacter hominis (strain ATCC BAA-381 / DSM 21671 / CCUG 45161 / LMG 19568 / NCTC 13146 / CH001A).